Here is a 196-residue protein sequence, read N- to C-terminus: Calcium channel flower (196 aa).

The next 3 helical transmembrane spans lie at 35-55 (LGIVAAFFAILFGLWNVLSII), 70-92 (LAGFVVMALEAPCCFVCIEQVGS), and 113-133 (AVPPIFMCFGLASLFGSGLIF).

It belongs to the calcium channel flower family. In terms of assembly, homomultimer. Associates with the dally/ magu complex.

Its subcellular location is the cell membrane. It is found in the cytoplasmic vesicle. The protein localises to the secretory vesicle. The protein resides in the synaptic vesicle membrane. It localises to the presynaptic cell membrane. Its subcellular location is the endosome. Channel activity is inhibited by La(3+), which reduces Ca(2+) influx and thus inhibits it's function in promoting activity-dependent bulk endocytosis (ADBE) in response to high stimuli. Transmembrane protein which mediates synaptic endocytosis, fitness-based cell culling, neuronal culling, morphogen gradient scaling, and calcium transport. Regulates synaptic endocytosis and hence couples exo- with endocytosis. Controls two major modes of synaptic vesicle (SV) endocytosis in the synaptic boutons of neuromuscular junctions (NMJs); Ca(2+) channel-independent Clathrin-mediated endocytosis (CME) in response to mild stimulation, and Ca(2+) channel-dependent activity-dependent bulk endocytosis (ADBE) in response to strong stimulation. Functions in ADBE and subsequent SV reformation from bulk endosomes by initiating Ca(2+) channel-dependent phosphatidylinositol 4,5-bisphosphate (PtdIns(4,5)P2) compartmentalization in synaptic boutons. There it acts at the periactive zone to provide the low Ca(2+) levels required to initiate Calcineurin activation and upregulate PtdIns(4,5)P2. Conversely PtdIns(4,5)P2 enhances fwe Ca(2+) channel-activity, establishing a positive feedback loop that induces PtdIns(4,5)P2 microdomain at the periactive zone. These microdomains trigger bulk membrane invagination (i.e. ADBE) by triggering actin polymerization while also promoting localization of fwe to bulk endosomes, thereby removing the ADBE trigger to reduce endocytosis and prevent excess membrane uptake. PtdIns(4,5)P2 then promotes SV reformation from the bulk endosomes, to coordinate ADBE and subsequent SV reformation. Different combinations of the flower isoforms at the cell membrane are also required for the identification and elimination of suboptimal or supernumerary cells during development, regeneration, and adulthood. Required for the recognition and elimination of unfit cells in the developing wing during cell competition. In the developing pupal retina, mediates the elimination of unwanted postmitotic neurons, including supernumerary photoreceptor neurons that form at the periphery of the retina and are contained within incomplete ommatidia units. Also required for efficient elimination and replacement of old neurons by newly generated neurons during regeneration in the adult brain following mechanical injury. Downstream of the flower fitness fingerprints, cells identified as unwanted or unfit are eliminated via apoptosis through the expression of ahuizotl (azot). However, the cells marked for elimination by the flower isoforms only undergo apoptosis if additional thresholds are met; (1) their neighboring fit/healthy cells express different levels of the fwe isoforms, and (2) the levels of the protective signal SPARC expressed by the loser or unwanted cells are unable to inhibit caspase activation. These additional thresholds for flower-mediated apoptosis, allows useful cells to recover from transient and limited stress before they are unnecessarily eliminated. Functions with dally and magu in a mechanism of scaling, which utilises apoptosis to ensure that the dpp morphogen gradient, which mediates organ growth, remains proportional to the size of the growing wing. In this mechanism, fwe represses dally- and Magu-dependent activity in expanding the gradient, and dally/Magu inhibits fwe-dependent apoptosis to keep cell death rate low. When the levels of these different proteins are optimally regulated the gradient correctly scales with organ growth but when this fails, fwe-mediated apoptosis is activated to trim the developing tissue to match the correct size of the gradient. The protein is Calcium channel flower of Drosophila grimshawi (Hawaiian fruit fly).